The sequence spans 422 residues: Transcription termination factor Rho 1 (422 aa).

In terms of domain architecture, Rho RNA-BD spans alanine 49–aspartate 124. ATP is bound by residues glycine 173 to alanine 178, arginine 185 to isoleucine 190, and arginine 216.

The protein belongs to the Rho family. As to quaternary structure, homohexamer. The homohexamer assembles into an open ring structure.

In terms of biological role, facilitates transcription termination by a mechanism that involves Rho binding to the nascent RNA, activation of Rho's RNA-dependent ATPase activity, and release of the mRNA from the DNA template. This chain is Transcription termination factor Rho 1, found in Ehrlichia chaffeensis (strain ATCC CRL-10679 / Arkansas).